The sequence spans 429 residues: C4-dicarboxylate transport protein (429 aa).

A run of 8 helical transmembrane segments spans residues 9 to 29, 45 to 65, 79 to 99, 149 to 169, 185 to 205, 223 to 243, 308 to 328, and 356 to 376; these read VLYV…HYYP, LIKM…IAGM, LLYF…ATHI, GEIL…AHLG, VLFG…FGAM, LIGT…GTIA, IYMT…LTWM, and AATL…ILGI.

The protein belongs to the dicarboxylate/amino acid:cation symporter (DAACS) (TC 2.A.23) family.

It is found in the cell inner membrane. In terms of biological role, responsible for the transport of dicarboxylates such as succinate, fumarate, and malate from the periplasm across the membrane. The sequence is that of C4-dicarboxylate transport protein from Burkholderia lata (strain ATCC 17760 / DSM 23089 / LMG 22485 / NCIMB 9086 / R18194 / 383).